The sequence spans 227 residues: MKLCVALDLANSDECLRVARELKGLDVWLKVGLRAYLRDGFKFINELKNVDNFKIFLDLKVHDIPNTMADACEVISQIGADMINIHASAGRVAMNSVMERLSKLNNRPLVLAVSALTSFDEESFSEIYAAHIKESVVKFSKISYECGLDGIVCSVYESLDIKNATSSNFLTLTPGIRPFGESNDDQKRVANLKTAMSNKSDFIVVGRPIYQSKNPREITEKILYNIT.

Substrate contacts are provided by residues Asp-8, Lys-30, 58-67 (DLKVHDIPNT), Thr-117, Arg-177, Gln-186, Gly-206, and Arg-207. Lys-60 serves as the catalytic Proton donor.

This sequence belongs to the OMP decarboxylase family. Type 1 subfamily. In terms of assembly, homodimer.

The enzyme catalyses orotidine 5'-phosphate + H(+) = UMP + CO2. It participates in pyrimidine metabolism; UMP biosynthesis via de novo pathway; UMP from orotate: step 2/2. In terms of biological role, catalyzes the decarboxylation of orotidine 5'-monophosphate (OMP) to uridine 5'-monophosphate (UMP). In Campylobacter fetus subsp. fetus (strain 82-40), this protein is Orotidine 5'-phosphate decarboxylase.